A 338-amino-acid chain; its full sequence is S-adenosylmethionine:tRNA ribosyltransferase-isomerase (338 aa).

This sequence belongs to the QueA family. As to quaternary structure, monomer.

Its subcellular location is the cytoplasm. It carries out the reaction 7-aminomethyl-7-carbaguanosine(34) in tRNA + S-adenosyl-L-methionine = epoxyqueuosine(34) in tRNA + adenine + L-methionine + 2 H(+). Its pathway is tRNA modification; tRNA-queuosine biosynthesis. In terms of biological role, transfers and isomerizes the ribose moiety from AdoMet to the 7-aminomethyl group of 7-deazaguanine (preQ1-tRNA) to give epoxyqueuosine (oQ-tRNA). In Francisella philomiragia subsp. philomiragia (strain ATCC 25017 / CCUG 19701 / FSC 153 / O#319-036), this protein is S-adenosylmethionine:tRNA ribosyltransferase-isomerase.